The following is a 953-amino-acid chain: Isoleucine--tRNA ligase (953 aa).

Residues 57 to 67 carry the 'HIGH' region motif; the sequence is PYANGDIHIGH. E582 provides a ligand contact to L-isoleucyl-5'-AMP. The short motif at 623 to 627 is the 'KMSKS' region element; that stretch reads KMSKS. K626 serves as a coordination point for ATP. Zn(2+)-binding residues include C916, C919, C936, and C939.

It belongs to the class-I aminoacyl-tRNA synthetase family. IleS type 1 subfamily. Monomer. It depends on Zn(2+) as a cofactor.

It localises to the cytoplasm. The catalysed reaction is tRNA(Ile) + L-isoleucine + ATP = L-isoleucyl-tRNA(Ile) + AMP + diphosphate. Functionally, catalyzes the attachment of isoleucine to tRNA(Ile). As IleRS can inadvertently accommodate and process structurally similar amino acids such as valine, to avoid such errors it has two additional distinct tRNA(Ile)-dependent editing activities. One activity is designated as 'pretransfer' editing and involves the hydrolysis of activated Val-AMP. The other activity is designated 'posttransfer' editing and involves deacylation of mischarged Val-tRNA(Ile). This chain is Isoleucine--tRNA ligase, found in Bordetella bronchiseptica (strain ATCC BAA-588 / NCTC 13252 / RB50) (Alcaligenes bronchisepticus).